Here is a 389-residue protein sequence, read N- to C-terminus: Putative F-box/kelch-repeat protein At4g35120 (389 aa).

In terms of domain architecture, F-box spans 24–70 (SMSISSLPDEIVLSFLALISKSYYRSLSLVSKSFYSLLSSTEIYAAR). Kelch repeat units lie at residues 128–174 (EIYK…FLDG), 176–225 (IYVI…AVSG), and 227–273 (RLYV…MKPI).

The chain is Putative F-box/kelch-repeat protein At4g35120 from Arabidopsis thaliana (Mouse-ear cress).